A 610-amino-acid chain; its full sequence is DNA mismatch repair protein MutL (610 aa).

This sequence belongs to the DNA mismatch repair MutL/HexB family.

In terms of biological role, this protein is involved in the repair of mismatches in DNA. It is required for dam-dependent methyl-directed DNA mismatch repair. May act as a 'molecular matchmaker', a protein that promotes the formation of a stable complex between two or more DNA-binding proteins in an ATP-dependent manner without itself being part of a final effector complex. The protein is DNA mismatch repair protein MutL of Rickettsia rickettsii (strain Iowa).